Reading from the N-terminus, the 193-residue chain is Large ribosomal subunit protein uL5 (193 aa).

This sequence belongs to the universal ribosomal protein uL5 family. As to quaternary structure, part of the 50S ribosomal subunit; part of the 5S rRNA/L5/L18/L25 subcomplex. Contacts the 5S rRNA and the P site tRNA. Forms a bridge to the 30S subunit in the 70S ribosome.

Its function is as follows. This is one of the proteins that bind and probably mediate the attachment of the 5S RNA into the large ribosomal subunit, where it forms part of the central protuberance. In the 70S ribosome it contacts protein S13 of the 30S subunit (bridge B1b), connecting the 2 subunits; this bridge is implicated in subunit movement. Contacts the P site tRNA; the 5S rRNA and some of its associated proteins might help stabilize positioning of ribosome-bound tRNAs. This Corynebacterium urealyticum (strain ATCC 43042 / DSM 7109) protein is Large ribosomal subunit protein uL5.